The chain runs to 659 residues: Cytochrome bo(3) ubiquinol oxidase subunit 1 (659 aa).

Residues 1–14 (MFGKLSLNSIPYHD) lie on the Extracellular side of the membrane. The helical transmembrane segment at 15–35 (PIIMITCCVVILVFLVISIII) threads the bilayer. Topologically, residues 36–56 (TIAQKWQYLWNEWCCTVDHKK) are cytoplasmic. A helical transmembrane segment spans residues 57 to 77 (IAKMYIFLAFIMLFRGFADAI). 3 residues coordinate a ubiquinone: Arg71, Asp75, and His101. The Extracellular portion of the chain corresponds to 78 to 109 (MMRMQQFLVSSYHGNGTGFLPPHHYDQIFTAH). His109 contributes to the heme b binding site. A helical transmembrane segment spans residues 110-130 (GVIMIFFVAMPLVIGLMNFVV). Residues 131–148 (PLQIGSRDVAFPFLNNLS) are Cytoplasmic-facing. Residues 149-169 (LWLTIFSALLMNVSLGIGEFA) form a helical membrane-spanning segment. Residues 170–192 (QTGWLAYPPLSELQYSPGVGVDY) lie on the Extracellular side of the membrane. Trp173 contacts heme b. Residues 193-213 (WIWSLQISGIGTTLTAINFLV) form a helical membrane-spanning segment. Topologically, residues 214-235 (TIIKMRSSGMNWFKIPVFTWTS) are cytoplasmic. Residues 236-256 (FCTNILIIASFPVLTVSLLLL) traverse the membrane as a helical segment. Residues 257-280 (TLDRYLGFHFFTNDFGGNMMMYVN) lie on the Extracellular side of the membrane. A helical transmembrane segment spans residues 281-301 (LIWIWGHPEVYILILPVFGIF). Position 287 (His287) interacts with Cu(2+). The segment at residues 287-291 (HPEVY) is a cross-link (1'-histidyl-3'-tyrosine (His-Tyr)). Tyr291 is a Fe(II)-heme o binding site. At 302-318 (SEVVATFSSKELFGYTS) the chain is on the cytoplasmic side. A helical membrane pass occupies residues 319-339 (LIWATIVITILSFIVWLHHFF). Cu(2+) is bound by residues His336 and His337. Residues 340–350 (TMGASANVNAF) lie on the Extracellular side of the membrane. A helical transmembrane segment spans residues 351–371 (FGITTMIISIPTGVKIFNWLF). Residues 372 to 382 (TMYRGNVRINS) lie on the Cytoplasmic side of the membrane. Residues 383-403 (IMLWTIGFLITFSIGGMAGVL) form a helical membrane-spanning segment. Residues 404 to 416 (LSLPVIDFSLHNS) are Extracellular-facing. Fe(II)-heme o is bound by residues His414 and His422. Residues 417–437 (LFLVAHFHNVIIGGVVFGCFA) traverse the membrane as a helical segment. His424 contacts heme b. Residues 438–459 (GITYWFPKLFGFMLSEKWGKRA) lie on the Cytoplasmic side of the membrane. A helical transmembrane segment spans residues 460–480 (FWCWFFGFFCAFMPLYALGLM). The Extracellular segment spans residues 481–499 (GMTRRLSQNINPQFHSMLT). Residues Arg484 and Arg485 each contribute to the heme b site. A helical membrane pass occupies residues 500 to 520 (IAALGTILIFIGIVFQIIQIF). Residues 521–587 (VSIRDRNLNR…KLPILYTSFH (67 aa)) lie on the Cytoplasmic side of the membrane. Residues 588 to 608 (MPKNTKFGFLIGFFAFLLGFS) traverse the membrane as a helical segment. A topological domain (extracellular) is located at residue Ala609. Residues 610-630 (VWYIFWLFFISFFVIIYLLVI) traverse the membrane as a helical segment. Over 631-659 (KSLDTNCDYIISIEEIKEIEKCINIKKMD) the chain is Cytoplasmic.

The protein belongs to the heme-copper respiratory oxidase family. In terms of assembly, the cytochrome bo(3) ubiquinol oxidase complex is a heterooctamer of two A chains, two B chains, two C chains and two D chains. It depends on Cu(2+) as a cofactor. Heme b serves as cofactor. The cofactor is Fe(II)-heme o.

The protein localises to the cell membrane. It carries out the reaction 2 a ubiquinol + O2 + n H(+)(in) = 2 a ubiquinone + 2 H2O + n H(+)(out). Cytochrome bo(3) ubiquinol oxidase is the terminal enzyme in the aerobic respiratory chain. Catalyzes the four-electron reduction of O2 to water, using a ubiquinol as a membrane soluble electron donor for molecular oxygen reduction. Has proton pump activity across the membrane in addition to electron transfer, pumping 2 protons/electron and generating a proton motive force. All the redox centers of this enzyme complex are located within the largest subunit, subunit I. Protons are probably pumped via D- and K- channels found in this subunit. In Buchnera aphidicola subsp. Baizongia pistaciae (strain Bp), this protein is Cytochrome bo(3) ubiquinol oxidase subunit 1 (cyoB).